The following is an 845-amino-acid chain: Beta-glucosidase (845 aa).

N-linked (GlcNAc...) asparagine glycosylation occurs at asparagine 66. Residue aspartate 225 is part of the active site. Asparagine 304, asparagine 438, and asparagine 621 each carry an N-linked (GlcNAc...) asparagine glycan. Positions 408–568 constitute a PA14 domain; sequence AENAGLIAKF…DDDEEIRNAA (161 aa).

It belongs to the glycosyl hydrolase 3 family. In terms of assembly, homotetramer.

It catalyses the reaction Hydrolysis of terminal, non-reducing beta-D-glucosyl residues with release of beta-D-glucose.. The protein operates within glycan metabolism; cellulose degradation. The chain is Beta-glucosidase from Kluyveromyces marxianus (Yeast).